Reading from the N-terminus, the 383-residue chain is MRVLAAMSGGVDSAVAAARAVDAGHEVTGVHLALSRTPGTLRTGARGCCTIEDSRDAWRAAEKLGIPYYVWDFSERFQADVVDDFVAEYAAGRTPNPCMRCNEKIKFAALLEKALALGFDAVCTGHYAKVVEGPDGHKELHRAADWAKDQSYVLGVLTAEQLEHAIFPLAETPSKAQVRAEAEERGLSVATKPDSHDICFIPDGDTRGWLADHMDLDPGRIVDTEGNELGEHRGAQAYTVGQRRGLHIGRPAPDGKPRFVLEIRPKTNEVVVGPEQLLAIDVMEGIRPSWAGLPPREVAALGADPKARSEEFEVTVQVRAHGDPAPARAWLTRSEGTPRLHVRLDTAQRGVAPGQTMVLYQGTRVLGQATIDAAFADRPHAAV.

ATP contacts are provided by residues 6–13 and Leu32; that span reads AMSGGVDS. The Nucleophile role is filled by Cys101. Cys101 and Cys199 are disulfide-bonded. Gly125 contacts ATP. Residues 148 to 150 are interaction with tRNA; it reads KDQ. Cys199 (cysteine persulfide intermediate) is an active-site residue.

It belongs to the MnmA/TRMU family.

The protein localises to the cytoplasm. The catalysed reaction is S-sulfanyl-L-cysteinyl-[protein] + uridine(34) in tRNA + AH2 + ATP = 2-thiouridine(34) in tRNA + L-cysteinyl-[protein] + A + AMP + diphosphate + H(+). In terms of biological role, catalyzes the 2-thiolation of uridine at the wobble position (U34) of tRNA, leading to the formation of s(2)U34. This chain is tRNA-specific 2-thiouridylase MnmA, found in Kocuria rhizophila (strain ATCC 9341 / DSM 348 / NBRC 103217 / DC2201).